The following is a 391-amino-acid chain: Multidrug resistance protein MdtL (391 aa).

The Cytoplasmic portion of the chain corresponds to 1-3 (MSR). A helical transmembrane segment spans residues 4–24 (FLICSFALVLLYPAGIDMYLV). At 25-41 (GLPRIAADLNASEAQLH) the chain is on the periplasmic side. The helical transmembrane segment at 42 to 62 (IAFSVYLAGMAAAMLFAGKVA) threads the bilayer. Over 63-68 (DRSGRK) the chain is Cytoplasmic. Residues 69-89 (PVAIPGAALFIIASVFCSLAE) traverse the membrane as a helical segment. The Periplasmic portion of the chain corresponds to 90–92 (TST). Residues 93-113 (LFLAGRFLQGLGAGCCYVVAF) form a helical membrane-spanning segment. At 114–130 (AILRDTLDDRRRAKVLS) the chain is on the cytoplasmic side. The helical transmembrane segment at 131-151 (LLNGITCIIPVLAPVLGHLIM) threads the bilayer. The Periplasmic segment spans residues 152–157 (LKFPWQ). The helical transmembrane segment at 158-178 (SLFWAMAMMGIAVLMLSLFIL) threads the bilayer. The Cytoplasmic segment spans residues 179–202 (KETRPASPAASDKPRENSESLLNR). The helical transmembrane segment at 203–222 (FFLSRVVITTLSVSVILTFV) threads the bilayer. Residues 223-244 (NTSPVLLMEIMGFERGEYATIM) are Periplasmic-facing. Residues 245–265 (ALTAGVSMTFSFSTPFALGIF) traverse the membrane as a helical segment. The Cytoplasmic segment spans residues 266–268 (KPR). Residues 269 to 289 (TLMITSQVLFLAAGITLAVSP) traverse the membrane as a helical segment. Residues 290-292 (SHA) are Periplasmic-facing. Residues 293–313 (VSLFGITLICAGFSVGFGVAM) traverse the membrane as a helical segment. Topologically, residues 314 to 330 (SQALGPFSLRAGVASST) are cytoplasmic. Residues 331-351 (LGIAQVCGSSLWIWLAAVVGI) form a helical membrane-spanning segment. The Periplasmic segment spans residues 352 to 355 (GAWN). Residues 356–376 (MLIGILIACSIVSLLLIMFVA) form a helical membrane-spanning segment. Over 377 to 391 (PGRPVAAHEEIHHHA) the chain is Cytoplasmic.

This sequence belongs to the major facilitator superfamily. DHA1 family. MdtL (TC 2.A.1.2.22) subfamily.

Its subcellular location is the cell inner membrane. In Shigella flexneri, this protein is Multidrug resistance protein MdtL (mdtL).